The following is a 968-amino-acid chain: RNA polymerase-associated protein RapA (968 aa).

One can recognise a Helicase ATP-binding domain in the interval 163–332 (EVGRRFAPRV…FARLRLLDPD (170 aa)). Residue 176 to 183 (DEVGLGKT) participates in ATP binding. The DEAH box signature appears at 278-281 (DEAH). The Helicase C-terminal domain occupies 491–645 (RVDWLIDFLK…TCPSGHILFN (155 aa)).

It belongs to the SNF2/RAD54 helicase family. RapA subfamily. As to quaternary structure, interacts with the RNAP. Has a higher affinity for the core RNAP than for the holoenzyme. Its ATPase activity is stimulated by binding to RNAP.

Functionally, transcription regulator that activates transcription by stimulating RNA polymerase (RNAP) recycling in case of stress conditions such as supercoiled DNA or high salt concentrations. Probably acts by releasing the RNAP, when it is trapped or immobilized on tightly supercoiled DNA. Does not activate transcription on linear DNA. Probably not involved in DNA repair. This Shewanella woodyi (strain ATCC 51908 / MS32) protein is RNA polymerase-associated protein RapA.